A 149-amino-acid chain; its full sequence is Transcription factor HY5-like (149 aa).

A disordered region spans residues 1 to 77 (MSLQRPNGNS…RRRGRNPVDK (77 aa)). The interaction with COP1 stretch occupies residues 23–36 (ESDEELLMVPDMEA). S24 carries the post-translational modification Phosphoserine. Polar residues predominate over residues 55–64 (ELDQTQNGVS). Positions 78 to 141 (EYRSLKRLLR…TMLRKMLINT (64 aa)) constitute a bZIP domain. Residues 80–100 (RSLKRLLRNRVSAQQARERKK) are basic motif. Residues 106-134 (LESRANELQNNNDQLEEKISTLTNENTML) are leucine-zipper.

The protein belongs to the bZIP family. Heterodimer; heterodimerizes with HY5 via the leucine-zipper domains. Interacts with COP1 WD40 domain. Interacts with BBX24/STO and BBX25/STH. Post-translationally, ubiquitinated by COP1. Ubiquitination takes place in darkness and leads to its subsequent degradation, thereby preventing the activation of photomorphogenesis signals.

The protein localises to the nucleus. Its function is as follows. Transcription factor that promotes photomorphogenesis in light. Acts downstream of the light receptor network and directly affects transcription of light-induced genes. Specifically involved in the blue light specific pathway, suggesting that it participates in transmission of cryptochromes (CRY1 and CRY2) signals to downstream responses. In darkness, its degradation prevents the activation of light-induced genes. This Arabidopsis thaliana (Mouse-ear cress) protein is Transcription factor HY5-like (HYH).